We begin with the raw amino-acid sequence, 136 residues long: Large-conductance mechanosensitive channel (136 aa).

2 helical membrane passes run 9 to 29 (AFAS…GAAF) and 79 to 99 (IQTV…LKAI).

It belongs to the MscL family. In terms of assembly, homopentamer.

The protein localises to the cell inner membrane. Functionally, channel that opens in response to stretch forces in the membrane lipid bilayer. May participate in the regulation of osmotic pressure changes within the cell. In Shewanella sp. (strain W3-18-1), this protein is Large-conductance mechanosensitive channel.